A 359-amino-acid polypeptide reads, in one-letter code: Membrane-bound lytic murein transglycosylase C (359 aa).

Positions 1–16 (MKKYLALALIAPLLIS) are cleaved as a signal peptide. A lipid anchor (N-palmitoyl cysteine) is attached at C17. A lipid anchor (S-diacylglycerol cysteine) is attached at C17.

The protein belongs to the transglycosylase Slt family.

It is found in the cell outer membrane. The enzyme catalyses Exolytic cleavage of the (1-&gt;4)-beta-glycosidic linkage between N-acetylmuramic acid (MurNAc) and N-acetylglucosamine (GlcNAc) residues in peptidoglycan, from either the reducing or the non-reducing ends of the peptidoglycan chains, with concomitant formation of a 1,6-anhydrobond in the MurNAc residue.. Murein-degrading enzyme. May play a role in recycling of muropeptides during cell elongation and/or cell division. In Escherichia coli O81 (strain ED1a), this protein is Membrane-bound lytic murein transglycosylase C.